A 541-amino-acid polypeptide reads, in one-letter code: Ankyrin repeat domain-containing protein 13C (541 aa).

The span at 1–20 (MTGEKIRSLRRDHKPSKEEG) shows a compositional bias: basic and acidic residues. The disordered stretch occupies residues 1–27 (MTGEKIRSLRRDHKPSKEEGDLLEPGD). 3 ANK repeats span residues 111-142 (PAHYPVHECVFKGDVRRLSSLIRTHNIGQKDN), 143-172 (HGNTPLHLAVMLGNKECAHLLLAHNAPVKV), and 176-205 (QGWSPLAEAISYGDRQMITALLRKLKQQSR). A Phosphoserine modification is found at serine 411.

The protein localises to the endoplasmic reticulum membrane. Functionally, acts as a molecular chaperone for G protein-coupled receptors, regulating their biogenesis and exit from the ER. This Homo sapiens (Human) protein is Ankyrin repeat domain-containing protein 13C (ANKRD13C).